The chain runs to 149 residues: Large ribosomal subunit protein bL9 (149 aa).

The protein belongs to the bacterial ribosomal protein bL9 family.

Binds to the 23S rRNA. The polypeptide is Large ribosomal subunit protein bL9 (Acidothermus cellulolyticus (strain ATCC 43068 / DSM 8971 / 11B)).